The chain runs to 960 residues: Testis anion transporter 1 (960 aa).

The Cytoplasmic segment spans residues 1–93 (MQPDRSFQSF…YRFKDWLLGD (93 aa)). Residues 94 to 114 (LLAGISVGLVQIPQVLMLGLL) traverse the membrane as a helical segment. At 115–117 (ARH) the chain is on the extracellular side. A helical membrane pass occupies residues 118–138 (LIPPLNVSYAAFCASVIYGIF). Position 139 (Gly-139) is a topological domain, cytoplasmic. A helical transmembrane segment spans residues 140 to 160 (SCHQMSIGTFFLVSALAINVL). The Extracellular portion of the chain corresponds to 161–201 (RTQPFNRGHLLLGTFIQADFSNTSFYENYNRSLSSVASVTL). The N-linked (GlcNAc...) asparagine glycan is linked to Asn-190. 2 helical membrane passes run 202 to 222 (LTGI…VAYI) and 223 to 243 (PEAA…LSQL). At 244–268 (TCIFGIMISYNSGPIAFFYNIINYC) the chain is on the cytoplasmic side. The chain crosses the membrane as a helical span at residues 269-289 (LGLPKANSTSILLFLTAMVAL). Residues 290–353 (RINKCIRISF…PVTPDMSNLT (64 aa)) lie on the Extracellular side of the membrane. A helical membrane pass occupies residues 354–374 (EVLIESFSLALVSSSLLVFLG). The Cytoplasmic segment spans residues 375 to 390 (KKIASFHNYDVNSNQD). A helical transmembrane segment spans residues 391-411 (LIAIGLCNVVSSFFRSYVFTG). Residues 412-427 (AVARTIIQDKTGGRQQ) are Extracellular-facing. A helical transmembrane segment spans residues 428–448 (FASLVGAGIMLLLMMKMARFF). The Cytoplasmic portion of the chain corresponds to 449 to 453 (YRLPN). A helical membrane pass occupies residues 454-474 (AIVAGIILSNVLPYLEAVYTL). The Extracellular portion of the chain corresponds to 475–494 (PSLWRQNQYDCLIWMVTFMS). A helical membrane pass occupies residues 495–515 (AILLGLDIGLVVAVTFAFFII). Residues 516–960 (TVQSHRTKIL…ADTSEDALEI (445 aa)) lie on the Cytoplasmic side of the membrane. In terms of domain architecture, STAS spans 541 to 792 (DYREVANIPG…LTLHDAVLFA (252 aa)). Residues 662-957 (ITSSSSQRNP…TSKADTSEDA (296 aa)) form an interaction with RACGAP1 region. Disordered regions lie at residues 807–857 (ESET…EESD) and 881–960 (EVEP…ALEI). Over residues 818–827 (ETDKKEESRH) the composition is skewed to basic and acidic residues. The span at 884 to 904 (PESELEPESELDQETELEPEP) shows a compositional bias: acidic residues. Residues 926–935 (SPTQTQARTQ) show a composition bias toward polar residues.

Belongs to the SLC26A/SulP transporter (TC 2.A.53) family. As to quaternary structure, interacts with RACGAP1. Interacts with CFTR; stimulates anion transport activity of CFTR. N-glycosylated.

The protein localises to the membrane. The catalysed reaction is sulfate(out) + chloride(in) = sulfate(in) + chloride(out). It carries out the reaction oxalate(in) + chloride(out) = oxalate(out) + chloride(in). Antiporter that mediates the exchange of sulfate and oxalate against chloride ions across a membrane. Stimulates anion transport activity of CFTR. May cooperate with CFTR in the regulation of chloride and bicarbonate ions fluxes required for activation of the ADCY10/PKA pathway during sperm motility and sperm capacitation. May play a role in sperm tail differentiation and motility and hence male fertility. In Bos taurus (Bovine), this protein is Testis anion transporter 1.